The sequence spans 296 residues: MKSAPSRPRSPLQSRLALYLDLIRWNRPAGWLLLLWPTLSALWVAAGGFPGWHLLSVFTLGTILMRSAGCCINDVADRDFDRHVKRTAARPVTTGAVSVKEALVLGAVLALLAFALVLTTNAITIGISGAALAITLAYPYAKRYVSMPQAVLGVAFGMGIPMAFAAVLGEVPRLAWLLMLGNLFWVLAYDTEYAMVDRDDDIRLGLKTSAITLGRLDVPVILLCYLAFIVIWDVALMPYVQGALFTIAFALAFGQVAWHYTLIRSRSREGCFKAFRLNHWLGFTLFVGIAGSYALR.

8 helical membrane-spanning segments follow: residues 29 to 49 (AGWLLLLWPTLSALWVAAGGF), 52 to 72 (WHLLSVFTLGTILMRSAGCCI), 103 to 123 (LVLGAVLALLAFALVLTTNAI), 151 to 171 (VLGVAFGMGIPMAFAAVLGEV), 176 to 196 (WLLMLGNLFWVLAYDTEYAMV), 220 to 240 (VILLCYLAFIVIWDVALMPYV), 243 to 263 (ALFTIAFALAFGQVAWHYTLI), and 275 to 295 (FRLNHWLGFTLFVGIAGSYAL).

Belongs to the UbiA prenyltransferase family. Mg(2+) serves as cofactor.

The protein localises to the cell inner membrane. It catalyses the reaction all-trans-octaprenyl diphosphate + 4-hydroxybenzoate = 4-hydroxy-3-(all-trans-octaprenyl)benzoate + diphosphate. Its pathway is cofactor biosynthesis; ubiquinone biosynthesis. Functionally, catalyzes the prenylation of para-hydroxybenzoate (PHB) with an all-trans polyprenyl group. Mediates the second step in the final reaction sequence of ubiquinone-8 (UQ-8) biosynthesis, which is the condensation of the polyisoprenoid side chain with PHB, generating the first membrane-bound Q intermediate 3-octaprenyl-4-hydroxybenzoate. The chain is 4-hydroxybenzoate octaprenyltransferase from Albidiferax ferrireducens (strain ATCC BAA-621 / DSM 15236 / T118) (Rhodoferax ferrireducens).